Here is an 886-residue protein sequence, read N- to C-terminus: Receptor-like kinase TMK2 (886 aa).

An N-terminal signal peptide occupies residues 1–20 (MIAKNFLLLLCFIALVNVES). Residues 21-460 (SPDEAVMIAL…GKKASSNAGK (440 aa)) lie on the Extracellular side of the membrane. N-linked (GlcNAc...) asparagine glycosylation is present at N41. C48 and C56 are joined by a disulfide. LRR repeat units lie at residues 59–83 (SNRV…LGKL), 84–106 (TSLT…LAGL), 107–129 (KSLV…FFSG), 131–155 (SSLQ…LENA), 157–179 (SLVD…LFEG), 182–206 (FSSL…FSDS), 208–232 (VQVL…LQKM), 233–254 (TSLT…DFSG), 255–279 (LVSL…LFEL), and 281–302 (SLSD…FTAP). Residues N154, N167, and N202 are each glycosylated (N-linked (GlcNAc...) asparagine). N237 carries N-linked (GlcNAc...) asparagine glycosylation. N298 carries an N-linked (GlcNAc...) asparagine glycan. 2 disulfides stabilise this stretch: C315-C323 and C353-C361. LRR repeat units lie at residues 363-386 (GTDI…RFAD), 387-410 (FASL…ELAK), and 411-438 (LSNL…IVNT). 5 N-linked (GlcNAc...) asparagine glycosylation sites follow: N377, N394, N401, N432, and N437. Residues 461-481 (IVGSVIGILLALLLIGVAIFF) traverse the membrane as a helical segment. The Cytoplasmic portion of the chain corresponds to 482 to 886 (LVKKKMQYHK…ESTFKSGQGR (405 aa)). A Protein kinase domain is found at 547 to 827 (FDEKNILGRG…HVVNVLVSLV (281 aa)). Residues 553–561 (LGRGGFGIV) and K575 each bind ATP. D676 (proton acceptor) is an active-site residue.

It belongs to the protein kinase superfamily. Ser/Thr protein kinase family. In terms of tissue distribution, expressed in siliques and flowers.

It is found in the membrane. The catalysed reaction is L-seryl-[protein] + ATP = O-phospho-L-seryl-[protein] + ADP + H(+). It catalyses the reaction L-threonyl-[protein] + ATP = O-phospho-L-threonyl-[protein] + ADP + H(+). In terms of biological role, involved in auxin signal transduction and cell expansion and proliferation regulation. In Arabidopsis thaliana (Mouse-ear cress), this protein is Receptor-like kinase TMK2.